Here is a 216-residue protein sequence, read N- to C-terminus: Adenylate kinase (216 aa).

Residue 10 to 15 coordinates ATP; that stretch reads GAGKGT. The interval 30 to 59 is NMP; sequence STGDMLRAAVAAGTEVGKRAKAVMDAGKLV. AMP contacts are provided by residues Thr-31, Arg-36, 57 to 59, 85 to 88, and Gln-92; these read KLV and GFPR. The interval 126-163 is LID; the sequence is GRYTCANCGAGYHDENLRPKVEGVCDRCGSTHFKRRAD. ATP is bound at residue Arg-127. Positions 130, 133, 150, and 153 each coordinate Zn(2+). 2 residues coordinate AMP: Arg-160 and Arg-172. Residue Ala-200 coordinates ATP.

This sequence belongs to the adenylate kinase family. In terms of assembly, monomer.

It localises to the cytoplasm. The enzyme catalyses AMP + ATP = 2 ADP. The protein operates within purine metabolism; AMP biosynthesis via salvage pathway; AMP from ADP: step 1/1. Catalyzes the reversible transfer of the terminal phosphate group between ATP and AMP. Plays an important role in cellular energy homeostasis and in adenine nucleotide metabolism. This Rhizobium rhizogenes (strain K84 / ATCC BAA-868) (Agrobacterium radiobacter) protein is Adenylate kinase.